We begin with the raw amino-acid sequence, 184 residues long: dCTP deaminase (184 aa).

DCTP is bound at residue 107–112 (KSTYAR). The active-site Proton donor/acceptor is Glu133. DCTP contacts are provided by Gln152, Tyr166, and Gln176.

The protein belongs to the dCTP deaminase family. Homotrimer.

It carries out the reaction dCTP + H2O + H(+) = dUTP + NH4(+). Its pathway is pyrimidine metabolism; dUMP biosynthesis; dUMP from dCTP (dUTP route): step 1/2. Its function is as follows. Catalyzes the deamination of dCTP to dUTP. This Granulibacter bethesdensis (strain ATCC BAA-1260 / CGDNIH1) protein is dCTP deaminase.